Reading from the N-terminus, the 37-residue chain is Esculentin-2JDb (37 aa).

A disulfide bridge links C31 with C37.

As to expression, expressed by the skin glands.

The protein localises to the secreted. Has antibacterial activity against E.coli and S.aureus strains. This is Esculentin-2JDb from Odorrana jingdongensis (Jingdong frog).